Reading from the N-terminus, the 725-residue chain is Ribonuclease Y (725 aa).

Residues 4-24 traverse the membrane as a helical segment; it reads VLVILLSLVLLVLVALILAVA. Disordered stretches follow at residues 62 to 140, 165 to 195, and 300 to 321; these read DGPA…ASDT, VAAT…SVRR, and EQRV…AGRE. Composition is skewed to low complexity over residues 84-100 and 114-137; these read DAPG…PDAG and AAAP…PADA. The KH domain occupies 415 to 481; sequence VVTVLHLPGD…RITLAALVSD (67 aa). The region spanning 541–634 is the HD domain; the sequence is VLAHLIESAH…TQAADQISGG (94 aa).

It belongs to the RNase Y family.

The protein resides in the cell membrane. In terms of biological role, endoribonuclease that initiates mRNA decay. This is Ribonuclease Y from Frankia alni (strain DSM 45986 / CECT 9034 / ACN14a).